The sequence spans 430 residues: Sphingosine-1-phosphate phosphatase 1 (430 aa).

Residues 34-103 (SSPAADEDAE…AGSQRRNSLT (70 aa)) form a disordered region. Ser-101 bears the Phosphoserine mark. At Thr-103 the chain carries Phosphothreonine. Helical transmembrane passes span 121 to 141 (FCLGTELGNELFYILFFPFWI), 152 to 172 (LVIIWVLVMYLGQCTKDIIRW), 193 to 213 (MPSTHAMSGTAIPIAMFLLTY), and 216 to 236 (WQYPLIYGLILIPCWSSLVCL). Positions 167–175 (KDIIRWPRP) are phosphatase sequence motif I. The interval 194–197 (PSTH) is phosphatase sequence motif II. His-197 (proton donor) is an active-site residue. A phosphatase sequence motif III region spans residues 237–248 (SRIYMGMHSILD). The Nucleophile role is filled by His-244. Helical transmembrane passes span 246 to 266 (ILDVIAGFLYTILILIIFYPL), 279 to 299 (YAPLIIIGLHLILGIFSFTLD), 311 to 331 (ILGSGAGIACGSHAAYTLGLS), 348 to 368 (VTLFGKAILRIVLGMLLVLFV), and 409 to 429 (YGMVGFSITFLVPYVFSFIGI).

Belongs to the type 2 lipid phosphate phosphatase family. In terms of tissue distribution, highly expressed in liver and kidney. Expressed in epidermis, in the stratum granulosum and the stratum spinosum.

It localises to the endoplasmic reticulum membrane. Its subcellular location is the cell membrane. It carries out the reaction sphinganine 1-phosphate + H2O = sphinganine + phosphate. It catalyses the reaction sphing-4-enine 1-phosphate + H2O = sphing-4-enine + phosphate. With respect to regulation, inhibited by NaF, sodium orthovanadate, propanolol, and N-ethylmaleimide. Its function is as follows. Specifically dephosphorylates sphingosine 1-phosphate (S1P), dihydro-S1P, and phyto-S1P. Does not act on ceramide 1-phosphate, lysophosphatidic acid or phosphatidic acid. Sphingosine-1-phosphate phosphatase activity is needed for efficient recycling of sphingosine into the sphingolipid synthesis pathway. Regulates the intracellular levels of the bioactive sphingolipid metabolite S1P that regulates diverse biological processes acting both as an extracellular receptor ligand or as an intracellular second messenger. Involved in efficient ceramide synthesis from exogenous sphingoid bases. Converts S1P to sphingosine, which is readily metabolized to ceramide via ceramide synthase. In concert with sphingosine kinase 2 (SphK2), recycles sphingosine into ceramide through a phosphorylation/dephosphorylation cycle. Regulates endoplasmic-to-Golgi trafficking of ceramides, resulting in the regulation of ceramide levels in the endoplasmic reticulum, preferentially long-chain ceramide species, and influences the anterograde membrane transport of both ceramide and proteins from the endoplasmic reticulum to the Golgi apparatus. The modulation of intracellular ceramide levels in turn regulates apoptosis. Via S1P levels, modulates resting tone, intracellular Ca(2+) and myogenic vasoconstriction in resistance arteries. Also involved in unfolded protein response (UPR) and ER stress-induced autophagy via regulation of intracellular S1P levels. Involved in the regulation of epidermal homeostasis and keratinocyte differentiation. The sequence is that of Sphingosine-1-phosphate phosphatase 1 from Mus musculus (Mouse).